Consider the following 181-residue polypeptide: Oligoribonuclease (181 aa).

Residues 8–171 (LIWVDLEMTG…DDIRESIAEL (164 aa)) enclose the Exonuclease domain. Y129 is an active-site residue.

This sequence belongs to the oligoribonuclease family.

The protein resides in the cytoplasm. Its function is as follows. 3'-to-5' exoribonuclease specific for small oligoribonucleotides. The polypeptide is Oligoribonuclease (Vibrio campbellii (strain ATCC BAA-1116)).